Consider the following 2532-residue polypeptide: MTPLDAPGAPAPIAMVGMGCRFGGGATDPQKLWKLLEEGGSAWSKIPPSRFNVGGVYHPNGQRVGSMHVRGGHFLDEDPALFDASFFNMSTEVASCMDPQYRLILEVVYEALEAAGIPLEQVSGSKTGVFAGTMYHDYQGSFQRQPEALPRYFITGNAGTMLANRVSHFYDLRGPSVSIDTACSTTLTALHLAIQSLRAGESDMAIVAGANLLLNPDVFTTMSNLGFLSSDGISYSFDSRADGYGRGEGVAAIVLKTLPDAVRDGDPIRLIVRETAINQDGRTPAISTPSGEAQECLIQDCYQKAQLDPKQTSYVEAHGTGTRAGDPLELAVISAAFPGQQIQVGSVKANIGHTEAVSGLASLIKVALAVEKGVIPPNARFLQPSKKLLKDTHIQIPLCSQSWIPTDGVRRASINNFGFGGANAHAIVEQYGPFAETSICPPNGYSGNYDGNLGTDQAHIYVLSAKDENSCMRMVSRLCDYATHARPADDLQLLANIAYTLGSRRSNFRWKAVCTAHSLTGLAQNLAGEGMRPSKSADQVRLGWVFTGQGAQWFAMGRELIEMYPVFKEALLECDGYIKEMGSTWSIIEELSRPETESRVDQAEFSLPLSTALQIALVRLLWSWNIQPVAVTSHSSGEAAAAYAIGALTARSAIGISYIRGALTARDRLASVHKGGMLAVGLSRSEVGIYIRQVPLQSEECLVVGCVNSPSSVTVSGDLSAIAKLEELLHADRIFARRLKVTQAFHSSHMNSMTDAFRAGLTELFGADPSDAANASKDVIYASPRTGARLHDMNRLRDPIHWVECMLHPVEFESAFRRMCLDENDHMPKVDRVIEIGPHGALGGPIKQIMQLPELATCDIPYLSCLSRGKSSLSTLRLLASELIRAGFPVDLNAINFPRGCEAARVQVLSDLPPYPWNHETRYWKEPRISQSARQRKGPVHDLIGLQEPLNLPLARSWHNVLRVSDLPWLRDHVVGSHIVFPGAGFVCMAVMGISTLCSSDHESDDISYILRDVNFAQALILPADGEEGIDLRLTICAPDQSLGSQDWQRFLVHSITADKNDWTEHCTGLVRAEMDQPPSSLSNQQRIDPRPWSRKTAPQELWDSLHRVGIRHGPFFRNITCIESDGRGSWCTFAIADTASAMPHAYESQHIVHPTTLDSAVQAAYTTLPFAGSRIKSAMVPARVGCMKISSRLADLEARDMLRAQAKMHSQSPSALVTDVAVFDEADPVGGPVMELEGLVFQSLGASLGTSDRDSTDPGNTCSSWHWAPDISLVNPGWLEKTLGTGIQEHEISLILELRRCSVHFIQEAMESLSVGDVERLSGHLAKFYAWMQKQLACAQNGELGPESSSWTRDSEQARCSLRSRVVAGSTNGEMICRLGSVLPAILRREVDPLEVMMDGHLLSRYYVDALKWSRSNAQASELVRLCCHKNPRARILEIGGGTGGCTQLVVDSLGPNPPVGRYDFTDVSAGFFEAARKRFAGWQNVMDFRKLDIEDDPEAQGFVCGSYDVVLACQVLHATSNMQRTLTNVRKLLKPGGKLILVETTRDELDLFFTFGLLPGWWLSEEPERQSTPSLSPTMWRSMLHTTGFNGVEVEARDCDSHEFYMISTMMSTAVQATPMSCSVKLPEVLLVYVDSSTPMSWISDLQGEIRGRNCSVTSLQALRQVPPTEGQICVFLGEVEHSMLGSVTNDDFTLLTSMLQLAGGTLWVTQGATMKSDDPLKALHLGLLRTMRNESHGKRFVSLDLDPSRNPWTGDSRDAIVSVLDLISMSDEKEFDYAERDGVIHVPRAFSDSINGGEEDGYALEPFQDSQHLLRLDIQTPGLLDSLHFTKRNVDTYEPDKLPDDWVEIEPRAFGLNFRDIMVAMGQLESNVMGFECAGVVTSLSETARTIAPGLAVGDRVCALMNGHWASRVTTSRTNVVRIPETLSFPHAASIPLAFTTAYISLYTVARILPGETVLIHAGAGGVGQAAIILAQLTGAEVFTTAGSETKRNLLIDKFHLDPDHVFSSRDSSFVDGIKTRTRGKGVDVVLNSLAGPLLQKSFDCLARFGRFVEIGKKDLEQNSRLDMSTFVRNVSFSSVDILYWQQAKPAEIFQAMSEVILLWERTAIGLIHPISEYPMSALEKAFRTMQSGQHVGKIVVTVAPDDAVLVRQERMPLFLKPNVSYLVAGGLGGIGRRICEWLVDRGARYLIILSRTARVDPVVTSLQERGCTVSVQACDVADESQLEAALQQCRAEEMPPIRGVIQGAMVLKDALVSQMTADGFHAALRPKVQGSWNLHRIASDVDFFVMLSSLVGVMGGAGQANYAAAGAFQDALAEHRMAHNQPAVTIDLGMVQSIGYVAETDSAVAERLQRIGYQPLHEEEVLDVLEQAISPVCSPAAPTRPAVIVTGINTRPGPHWAHADWMQEARFAGIKYRDPLRDNHGALSLTPAEDDNLHARLNRAISQQESIAVIMEAMSCKLISMFGLTDSEMSATQTLAGIGVDSLVAIELRNWITAKFNVDISVFELMEGRTIAKVAEVVLQRYKA.

Residues 10-430 enclose the Ketosynthase family 3 (KS3) domain; the sequence is PAPIAMVGMG…GANAHAIVEQ (421 aa). Residues cysteine 183, histidine 318, and histidine 353 each act as for beta-ketoacyl synthase activity in the active site. The interval 545 to 870 is malonyl-CoA:ACP transacylase (MAT) domain; the sequence is VFTGQGAQWF…PYLSCLSRGK (326 aa). The active-site For malonyltransferase activity is serine 635. The segment at 941 to 1078 is N-terminal hotdog fold; the sequence is HDLIGLQEPL…GLVRAEMDQP (138 aa). Residues 941-1246 form a dehydratase (DH) domain region; that stretch reads HDLIGLQEPL…LEGLVFQSLG (306 aa). The 311-residue stretch at 941–1251 folds into the PKS/mFAS DH domain; it reads HDLIGLQEPL…FQSLGASLGT (311 aa). The active-site Proton acceptor; for dehydratase activity is the histidine 973. Positions 1075 to 1094 are disordered; that stretch reads MDQPPSSLSNQQRIDPRPWS. The span at 1078–1087 shows a compositional bias: polar residues; the sequence is PPSSLSNQQR. A C-terminal hotdog fold region spans residues 1092–1251; sequence PWSRKTAPQE…FQSLGASLGT (160 aa). Catalysis depends on aspartate 1159, which acts as the Proton donor; for dehydratase activity. The methyltransferase (CMet) domain stretch occupies residues 1423–1607; sequence ELVRLCCHKN…ARDCDSHEFY (185 aa). The tract at residues 1825–2144 is enoylreductase (ER) domain; it reads GLLDSLHFTK…SGQHVGKIVV (320 aa). The tract at residues 2168-2340 is ketoreductase (KR) domain; the sequence is SYLVAGGLGG…AVTIDLGMVQ (173 aa). A Carrier domain is found at 2453-2530; that stretch reads ESIAVIMEAM…KVAEVVLQRY (78 aa). Residue serine 2490 is modified to O-(pantetheine 4'-phosphoryl)serine.

In terms of assembly, interacts with LovD. Pantetheine 4'-phosphate is required as a cofactor.

The catalysed reaction is holo-[2-methylbutanoate polyketide synthase] + 2 malonyl-CoA + S-adenosyl-L-methionine + 2 NADPH + 3 H(+) = (S)-2-methylbutanoyl-[2-methylbutanoate polyketide synthase] + S-adenosyl-L-homocysteine + 2 CO2 + 2 NADP(+) + 2 CoA + H2O. Its pathway is polyketide biosynthesis; lovastatin biosynthesis. Lovastatin diketide synthase; part of the gene cluster that mediates the biosynthesis of lovastatin (also known as mevinolin, mevacor or monacolin K), a hypolipidemic inhibitor of (3S)-hydroxymethylglutaryl-coenzyme A (HMG-CoA) reductase (HMGR). The first step in the biosynthesis of lovastatin is the production of dihydromonacolin L acid by the lovastatin nonaketide synthase lovB and the trans-acting enoyl reductase lovC via condensation of one acetyl-CoA unit and 8 malonyl-CoA units. Dihydromonacolin L acid is released from lovB by the thioesterase lovG. Next, dihydromonacolin L acid is oxidized by the dihydromonacolin L monooxygenase lovA twice to form monacolin J acid. The 2-methylbutyrate moiety of lovastatin is synthesized by the lovastatin diketide synthase lovF via condensation of one acetyl-CoA unit and one malonyl-CoA unit. Finally, the covalent attachment of this moiety to monacolin J acid is catalyzed by the transesterase lovD to yield lovastatin. LovD has broad substrate specificity and can also convert monacolin J to simvastatin using alpha-dimethylbutanoyl-S-methyl-3-mercaptopropionate (DMB-S-MMP) as the thioester acyl donor, and can also catalyze the reverse reaction and function as hydrolase in vitro. LovD has much higher activity with LovF-bound 2-methylbutanoate than with free diketide substrates. The polypeptide is Lovastatin diketide synthase lovF (Aspergillus terreus).